We begin with the raw amino-acid sequence, 101 residues long: Protein mes1 (101 aa).

The span at 1–19 (MVNTDNKENEPPNMEKAHM) shows a compositional bias: basic and acidic residues. The tract at residues 1 to 101 (MVNTDNKENE…RSPNPLLSMR (101 aa)) is disordered.

As to quaternary structure, interacts with slp1.

The protein localises to the cytoplasm. It localises to the nucleus. In terms of biological role, specifically required for meiosis II (MII). Binds to slp1, an activator of the anapahase promoting complex/cyclcosome (APC/C), and counteracts its function in promoting proteolysis of cdc13. By suppressing the degradation of cdc13 at anaphase I this protein may help maintain a sufficient level of cdc2 kinase activity to complete MII. The polypeptide is Protein mes1 (mes1) (Schizosaccharomyces pombe (strain 972 / ATCC 24843) (Fission yeast)).